We begin with the raw amino-acid sequence, 239 residues long: Hexuronic acid methyltransferase AglP (239 aa).

This sequence belongs to the FkbM methyltransferase family.

The protein localises to the cytoplasm. The protein operates within cell surface structure biogenesis; S-layer biogenesis. In terms of biological role, involved in the assembly of a N-linked pentasaccharide that decorates the S-layer glycoprotein and flagellins. S-adenosyl-L-methionine-dependent methyltransferase that modifies the hexuronic acid found at position 4 of the pentasaccharide. This chain is Hexuronic acid methyltransferase AglP (aglP), found in Haloferax volcanii (strain ATCC 29605 / DSM 3757 / JCM 8879 / NBRC 14742 / NCIMB 2012 / VKM B-1768 / DS2) (Halobacterium volcanii).